A 183-amino-acid chain; its full sequence is Adenylate kinase (183 aa).

12 to 17 (GAGKGT) contributes to the ATP binding site. The segment at 32–61 (STGDLLRSEVSAGSALGQEAEAVMNRGELV) is NMP. Residues threonine 33, arginine 38, 59-61 (ELV), 86-89 (GFPR), and glutamine 93 contribute to the AMP site. Residues 127–133 (ARGRADD) form an LID region. Arginine 128 contacts ATP. 2 residues coordinate AMP: arginine 130 and arginine 141. Glycine 169 serves as a coordination point for ATP.

The protein belongs to the adenylate kinase family. As to quaternary structure, monomer.

It is found in the cytoplasm. The enzyme catalyses AMP + ATP = 2 ADP. It functions in the pathway purine metabolism; AMP biosynthesis via salvage pathway; AMP from ADP: step 1/1. Functionally, catalyzes the reversible transfer of the terminal phosphate group between ATP and AMP. Plays an important role in cellular energy homeostasis and in adenine nucleotide metabolism. The sequence is that of Adenylate kinase from Synechococcus sp. (strain WH7803).